The sequence spans 573 residues: Pyrophosphate--fructose 6-phosphate 1-phosphotransferase (573 aa).

G90 contributes to the diphosphate binding site. D184 contacts Mg(2+). Substrate-binding positions include 212–214 (TID), 251–252 (KY), 259–261 (MGR), E320, and 434–437 (YEGR). The active-site Proton acceptor is D214.

It belongs to the phosphofructokinase type A (PFKA) family. PPi-dependent PFK group II subfamily. Clade 'Long' sub-subfamily. Homodimer. Mg(2+) is required as a cofactor.

The protein localises to the cytoplasm. It carries out the reaction beta-D-fructose 6-phosphate + diphosphate = beta-D-fructose 1,6-bisphosphate + phosphate + H(+). It functions in the pathway carbohydrate degradation; glycolysis; D-glyceraldehyde 3-phosphate and glycerone phosphate from D-glucose: step 3/4. Its activity is regulated as follows. Non-allosteric. In terms of biological role, catalyzes the phosphorylation of D-fructose 6-phosphate, the first committing step of glycolysis. Uses inorganic phosphate (PPi) as phosphoryl donor instead of ATP like common ATP-dependent phosphofructokinases (ATP-PFKs), which renders the reaction reversible, and can thus function both in glycolysis and gluconeogenesis. Consistently, PPi-PFK can replace the enzymes of both the forward (ATP-PFK) and reverse (fructose-bisphosphatase (FBPase)) reactions. In Treponema pallidum (strain Nichols), this protein is Pyrophosphate--fructose 6-phosphate 1-phosphotransferase.